Reading from the N-terminus, the 607-residue chain is MAFRRQVKNFVKNYSDAEIKVREATSNDPWGPSSSLMLDISDLTFNTISLSEIMNMLWHRLNDHGKNWRHVYKSLTLMDYLIKNGSKKVIQHCREGFCNLQTLKDFQHIDEAGKDQGYYIREKSKQVITLLMDEPLLCKEREVACRTRQRTSHSILFSKRQLGSSNSLTACTSAPTPDISASEKKYKLPKFGRLHNKRNVCKAGLKQEHCQDVHLPTETMLSQETLPLKIHGWKSTEDLMTFLDDDPELPLLATPPSIVSPITCLSEAEEVCNLSGADAVPTLSENSPSGQRDVSLDKRSDGIFTNTVTENLLETPLEKQSAAEGLKTLTILPACWSSKEEFISPDLRVSKSDSTFHNQASVETLCLSPSFKIFDRVKEIVINKAYQKPAQSSIQMDDKILKTTTRVSTASEGASSFSPLSMSSPDLASPEKSAHLLSPILAGPSFWTLSHQQLSSTSFKDEDKTAKLHHSFASRGPVSSDVEENDSLNLLGILPNNSDSAKKNISHISSSHWGEFSTQNVDQFIPLSCSGFQSTKDFPQEPEAKNSISVLLREVKRAIARLHEDLSTVIQELNVINNILMSMSLNSSQISQSSQVPQSSEGSSDQI.

The ENTH domain maps to N9–R141. Residues E543 to N574 adopt a coiled-coil conformation.

The protein is ENTH domain-containing protein 1 (ENTHD1) of Homo sapiens (Human).